The sequence spans 268 residues: Tryptophan synthase alpha chain (268 aa).

Catalysis depends on proton acceptor residues Glu-49 and Asp-60.

The protein belongs to the TrpA family. As to quaternary structure, tetramer of two alpha and two beta chains.

It catalyses the reaction (1S,2R)-1-C-(indol-3-yl)glycerol 3-phosphate + L-serine = D-glyceraldehyde 3-phosphate + L-tryptophan + H2O. It participates in amino-acid biosynthesis; L-tryptophan biosynthesis; L-tryptophan from chorismate: step 5/5. Its function is as follows. The alpha subunit is responsible for the aldol cleavage of indoleglycerol phosphate to indole and glyceraldehyde 3-phosphate. The protein is Tryptophan synthase alpha chain of Escherichia fergusonii (strain ATCC 35469 / DSM 13698 / CCUG 18766 / IAM 14443 / JCM 21226 / LMG 7866 / NBRC 102419 / NCTC 12128 / CDC 0568-73).